We begin with the raw amino-acid sequence, 72 residues long: Omega-conotoxin-like SVIA mutant 1 (72 aa).

The first 22 residues, 1–22, serve as a signal peptide directing secretion; it reads MKLTCVVIVAVLLLTACQLITA. Positions 23–48 are excised as a propeptide; that stretch reads EDSRGAQKHRTLRSTARRSKSELTTR. 3 disulfides stabilise this stretch: cysteine 49–cysteine 63, cysteine 56–cysteine 66, and cysteine 62–cysteine 71. Position 55 is a 4-hydroxyproline (proline 55).

The protein belongs to the conotoxin O1 superfamily. As to expression, expressed by the venom duct.

It is found in the secreted. Its function is as follows. Omega-conotoxins act at presynaptic membranes, they bind and block voltage-gated calcium channels (Cav). The sequence is that of Omega-conotoxin-like SVIA mutant 1 from Conus striatus (Striated cone).